A 560-amino-acid polypeptide reads, in one-letter code: Thermosome subunit 1 (560 aa).

Residues 525-550 (LSGGQTGSDDDDGGAPGGMGGGMGGM) are disordered. The segment covering 538–550 (GAPGGMGGGMGGM) has biased composition (gly residues).

It belongs to the TCP-1 chaperonin family. The thermosome or CCT complex is a oligomeric complex of two octameric double-ring structures; the complex is probably a heterooligomer of CCT1, CCT2 and CCT3 with yet unknown stoichiometry.

Its function is as follows. Molecular chaperone that assists in the folding or refolding of nascent or denatured proteins along with ATP hydrolysis. ATPase activity is highest in thermosome assemblies containing CCT1:CCT2, followed by assemblies containing CCT1:CCT2:CCT3. Required for thermosome ATPase activity. Not required for growth. In Haloferax volcanii (strain ATCC 29605 / DSM 3757 / JCM 8879 / NBRC 14742 / NCIMB 2012 / VKM B-1768 / DS2) (Halobacterium volcanii), this protein is Thermosome subunit 1 (cct1).